We begin with the raw amino-acid sequence, 319 residues long: Cell division protein FtsN (319 aa).

Positions 1 to 30 (MAQRDYVRRSQPAPSRRKKSTSRKKQRNLP) are disordered. Over 1-33 (MAQRDYVRRSQPAPSRRKKSTSRKKQRNLPAVS) the chain is Cytoplasmic. The interval 4 to 6 (RDY) is mediates interaction with FtsA. The segment covering 15–27 (SRRKKSTSRKKQR) has biased composition (basic residues). The chain crosses the membrane as a helical span at residues 34–54 (PAMVAIAAAVLVTFIGGLYFI). Residues 55–319 (THHKKEESET…TNCIRLAAGG (265 aa)) are Periplasmic-facing. Disordered regions lie at residues 60–79 (EESE…PPKP) and 89–113 (LESR…TPEQ). 4 consecutive repeat copies span residues 115-120 (TPEQRQ), 145-150 (TPEQRQ), 197-200 (QSKP), and 220-223 (QSKP). The segment at 115–150 (TPEQRQLLEQMQADMRQQPTQLVEVPWNEQTPEQRQ) is 2 X 6 AA repeats. Positions 140–245 (PWNEQTPEQR…PKPTAEKKDE (106 aa)) are disordered. Residues 143-171 (EQTPEQRQQTLQRQRQAQQLAEQQRLAQQ) show a composition bias toward low complexity. The segment covering 172–221 (SRTTEQSWQQQTRTSQAAPVQAQPRQSKPASSQQPYQDLLQTPAHTTAQS) has biased composition (polar residues). Positions 197–223 (QSKPASSQQPYQDLLQTPAHTTAQSKP) are 2 X 4 AA repeats. A compositionally biased stretch (low complexity) spans 222–238 (KPQQAAPVARAADAPKP). Residues 242-316 (KKDERRWMVQ…AGHTNCIRLA (75 aa)) enclose the SPOR domain. An intrachain disulfide couples Cys-252 to Cys-312.

The protein belongs to the FtsN family. As to quaternary structure, interacts with FtsA via its N-terminal cytoplasmic domain. Interacts with ZapA, FtsQ, FtsW and FtsI.

It localises to the cell inner membrane. Its function is as follows. Essential cell division protein that activates septal peptidoglycan synthesis and constriction of the cell. Acts on both sides of the membrane, via interaction with FtsA in the cytoplasm and interaction with the FtsQBL complex in the periplasm. These interactions may induce a conformational switch in both FtsA and FtsQBL, leading to septal peptidoglycan synthesis by FtsI and associated synthases. Required for full FtsI activity. Required for recruitment of AmiC to the septal ring. The sequence is that of Cell division protein FtsN from Escherichia coli (strain K12).